We begin with the raw amino-acid sequence, 288 residues long: Light-independent protochlorophyllide reductase iron-sulfur ATP-binding protein (288 aa).

Residues 12-17 (GIGKST) and Lys41 contribute to the ATP site. Ser16 contacts Mg(2+). [4Fe-4S] cluster contacts are provided by Cys97 and Cys131. Residue 182–183 (NR) coordinates ATP.

The protein belongs to the NifH/BchL/ChlL family. In terms of assembly, homodimer. Protochlorophyllide reductase is composed of three subunits; ChlL, ChlN and ChlB. Requires [4Fe-4S] cluster as cofactor.

The enzyme catalyses chlorophyllide a + oxidized 2[4Fe-4S]-[ferredoxin] + 2 ADP + 2 phosphate = protochlorophyllide a + reduced 2[4Fe-4S]-[ferredoxin] + 2 ATP + 2 H2O. It functions in the pathway porphyrin-containing compound metabolism; chlorophyll biosynthesis (light-independent). Component of the dark-operative protochlorophyllide reductase (DPOR) that uses Mg-ATP and reduced ferredoxin to reduce ring D of protochlorophyllide (Pchlide) to form chlorophyllide a (Chlide). This reaction is light-independent. The L component serves as a unique electron donor to the NB-component of the complex, and binds Mg-ATP. This is Light-independent protochlorophyllide reductase iron-sulfur ATP-binding protein from Picosynechococcus sp. (strain ATCC 27264 / PCC 7002 / PR-6) (Agmenellum quadruplicatum).